We begin with the raw amino-acid sequence, 271 residues long: Phosphonates import ATP-binding protein PhnC 2 (271 aa).

An ABC transporter domain is found at 2-245 (LTIDKLTKRF…VARDIYGAGA (244 aa)). 34-41 (GRSGAGKS) serves as a coordination point for ATP.

Belongs to the ABC transporter superfamily. Phosphonates importer (TC 3.A.1.9.1) family. The complex is composed of two ATP-binding proteins (PhnC), two transmembrane proteins (PhnE) and a solute-binding protein (PhnD).

The protein localises to the cell inner membrane. It catalyses the reaction phosphonate(out) + ATP + H2O = phosphonate(in) + ADP + phosphate + H(+). Part of the ABC transporter complex PhnCDE involved in phosphonates import. Responsible for energy coupling to the transport system. The sequence is that of Phosphonates import ATP-binding protein PhnC 2 from Roseobacter denitrificans (strain ATCC 33942 / OCh 114) (Erythrobacter sp. (strain OCh 114)).